The sequence spans 332 residues: MQKNILVLGAGAWGTALALQLAYRGHNVRINSWKAEHNEQMLEDNNNHKYLPSIEKFPSRLKAIQDWQANIIEFDSILVATPSSGFKNTVLELKECILPQQNIISATKGFCHDSYALLSEIAEDILPTTKFALLTGPSFAKELANQLPTAVVVASKDINYARYVQELFSNENFRCYTTTDIIGAQVGGAVKNVLAITAGIAAGMEFGVNAHAALITRGLAEIKKLGLKLGANSETFIGLSCLGDLLLTCSDNQSRNRRFGLYLGQGMTIQQALKEVNNVVEGYFTAKAVYNLAKKHNVEMPLVFATYRILYEAADPRDIVKELMTRQLKNEN.

NADPH-binding residues include tryptophan 13, lysine 34, and lysine 108. The sn-glycerol 3-phosphate site is built by lysine 108, glycine 136, and serine 138. Alanine 140 is an NADPH binding site. Sn-glycerol 3-phosphate-binding residues include lysine 191, aspartate 244, serine 254, arginine 255, and asparagine 256. Lysine 191 (proton acceptor) is an active-site residue. Arginine 255 contacts NADPH. Residues valine 279 and glutamate 281 each coordinate NADPH.

It belongs to the NAD-dependent glycerol-3-phosphate dehydrogenase family.

Its subcellular location is the cytoplasm. The catalysed reaction is sn-glycerol 3-phosphate + NAD(+) = dihydroxyacetone phosphate + NADH + H(+). It catalyses the reaction sn-glycerol 3-phosphate + NADP(+) = dihydroxyacetone phosphate + NADPH + H(+). It functions in the pathway membrane lipid metabolism; glycerophospholipid metabolism. Catalyzes the reduction of the glycolytic intermediate dihydroxyacetone phosphate (DHAP) to sn-glycerol 3-phosphate (G3P), the key precursor for phospholipid synthesis. This Francisella tularensis subsp. mediasiatica (strain FSC147) protein is Glycerol-3-phosphate dehydrogenase [NAD(P)+].